Here is a 636-residue protein sequence, read N- to C-terminus: p-hydroxybenzoate-m-hydroxylase A (636 aa).

Residues 10 to 39 (DIVIVGAGPVGIVLSLCMSRWGYKVKHIDN), 241 to 243 (RLY), Tyr-289, and Asp-310 contribute to the FAD site. Residues 11–28 (IVIVGAGPVGIVLSLCMS) form a helical membrane-spanning segment.

It belongs to the PheA/TfdB FAD monooxygenase family. The cofactor is FAD.

The protein localises to the membrane. The catalysed reaction is 4-hydroxybenzoate + NADH + O2 + H(+) = 3,4-dihydroxybenzoate + NAD(+) + H2O. It catalyses the reaction 4-hydroxybenzoate + NADPH + O2 + H(+) = 3,4-dihydroxybenzoate + NADP(+) + H2O. Functionally, FAD-dependent monooxygenase; part of the benzoic acid degradation pathway also known as the protocatechuic acid pathway. Benzoic acid debradation begins with the conversion of benzoic acid into 4-hydroxybenzoic acid through hydroxylation by the benzoate-4-monooxygenase bphA, and its partner NADPH-cytochrome P450 reductase cprA which act as a mediator in electron donation from NADPH. 4-Hydroxybenzoic acid is then converted into 3,4-dihydroxybenzoic acid (also called protocatechuic acid) by the p-hydroxybenzoate-m-hydroxylase phhA. Protocatechuic acid is converted into 3-carboxy-cis,cis-muconic acid by the intradiol ring-cleavage dioxygenase prcA, which is further metabolized through the 3-oxoadipate pathway to finally enter the tricarboxylic acid cycle (TCA). In Aspergillus niger (strain ATCC MYA-4892 / CBS 513.88 / FGSC A1513), this protein is p-hydroxybenzoate-m-hydroxylase A.